The sequence spans 683 residues: DNA ligase (683 aa).

Residues 36–40, 85–86, and glutamate 119 each bind NAD(+); these read DAEYD and SL. Lysine 121 acts as the N6-AMP-lysine intermediate in catalysis. The NAD(+) site is built by arginine 142, glutamate 179, lysine 295, and lysine 319. The Zn(2+) site is built by cysteine 413, cysteine 416, cysteine 431, and cysteine 437. Positions 596–683 constitute a BRCT domain; that stretch reads TETLPLSGQT…EHQAHLGGEA (88 aa).

The protein belongs to the NAD-dependent DNA ligase family. LigA subfamily. Requires Mg(2+) as cofactor. Mn(2+) is required as a cofactor.

The catalysed reaction is NAD(+) + (deoxyribonucleotide)n-3'-hydroxyl + 5'-phospho-(deoxyribonucleotide)m = (deoxyribonucleotide)n+m + AMP + beta-nicotinamide D-nucleotide.. In terms of biological role, DNA ligase that catalyzes the formation of phosphodiester linkages between 5'-phosphoryl and 3'-hydroxyl groups in double-stranded DNA using NAD as a coenzyme and as the energy source for the reaction. It is essential for DNA replication and repair of damaged DNA. This Hahella chejuensis (strain KCTC 2396) protein is DNA ligase.